Consider the following 330-residue polypeptide: Pyridoxal 5'-phosphate synthase subunit PdxS (330 aa).

Residue Asp-23 participates in D-ribose 5-phosphate binding. Lys-80 acts as the Schiff-base intermediate with D-ribose 5-phosphate in catalysis. Residue Gly-152 coordinates D-ribose 5-phosphate. Arg-164 is a D-glyceraldehyde 3-phosphate binding site. Residues Gly-250 and 271 to 272 each bind D-ribose 5-phosphate; that span reads GS.

It belongs to the PdxS/SNZ family. In terms of assembly, in the presence of PdxT, forms a dodecamer of heterodimers.

The catalysed reaction is aldehydo-D-ribose 5-phosphate + D-glyceraldehyde 3-phosphate + L-glutamine = pyridoxal 5'-phosphate + L-glutamate + phosphate + 3 H2O + H(+). Its pathway is cofactor biosynthesis; pyridoxal 5'-phosphate biosynthesis. Functionally, catalyzes the formation of pyridoxal 5'-phosphate from ribose 5-phosphate (RBP), glyceraldehyde 3-phosphate (G3P) and ammonia. The ammonia is provided by the PdxT subunit. Can also use ribulose 5-phosphate and dihydroxyacetone phosphate as substrates, resulting from enzyme-catalyzed isomerization of RBP and G3P, respectively. The sequence is that of Pyridoxal 5'-phosphate synthase subunit PdxS from Methanocaldococcus jannaschii (strain ATCC 43067 / DSM 2661 / JAL-1 / JCM 10045 / NBRC 100440) (Methanococcus jannaschii).